The following is a 133-amino-acid chain: ATP synthase epsilon chain, chloroplastic (133 aa).

It belongs to the ATPase epsilon chain family. In terms of assembly, F-type ATPases have 2 components, CF(1) - the catalytic core - and CF(0) - the membrane proton channel. CF(1) has five subunits: alpha(3), beta(3), gamma(1), delta(1), epsilon(1). CF(0) has three main subunits: a, b and c.

Its subcellular location is the plastid. The protein resides in the chloroplast thylakoid membrane. Its function is as follows. Produces ATP from ADP in the presence of a proton gradient across the membrane. The polypeptide is ATP synthase epsilon chain, chloroplastic (Lactuca sativa (Garden lettuce)).